A 186-amino-acid chain; its full sequence is NADH-dependent FMN reductase SfnF (186 aa).

It belongs to the SsuE family.

The enzyme catalyses FMNH2 + NAD(+) = FMN + NADH + 2 H(+). Involved in the dimethyl sulfide degradation pathway. Catalyzes the NADH-dependent reduction of FMN. This is NADH-dependent FMN reductase SfnF from Pseudomonas putida (Arthrobacter siderocapsulatus).